Reading from the N-terminus, the 72-residue chain is Large ribosomal subunit protein bL31 (72 aa).

Positions 16, 18, 38, and 41 each coordinate Zn(2+).

This sequence belongs to the bacterial ribosomal protein bL31 family. Type A subfamily. Part of the 50S ribosomal subunit. Zn(2+) is required as a cofactor.

Binds the 23S rRNA. The sequence is that of Large ribosomal subunit protein bL31 from Vibrio atlanticus (strain LGP32) (Vibrio splendidus (strain Mel32)).